Reading from the N-terminus, the 550-residue chain is Medium-chain acyl-CoA ligase Mig (550 aa).

A signal peptide spans 1 to 19 (MSDTTTAFTVPAVAKAVAA).

It belongs to the ATP-dependent AMP-binding enzyme family.

It is found in the secreted. Its subcellular location is the cell wall. The enzyme catalyses a medium-chain fatty acid + ATP + CoA = a medium-chain fatty acyl-CoA + AMP + diphosphate. It catalyses the reaction hexanoate + ATP + CoA = hexanoyl-CoA + AMP + diphosphate. The catalysed reaction is heptanoate + ATP + CoA = heptanoyl-CoA + AMP + diphosphate. It carries out the reaction octanoate + ATP + CoA = octanoyl-CoA + AMP + diphosphate. The enzyme catalyses decanoate + ATP + CoA = decanoyl-CoA + AMP + diphosphate. It catalyses the reaction dodecanoate + ATP + CoA = dodecanoyl-CoA + AMP + diphosphate. The catalysed reaction is tetradecanoate + ATP + CoA = tetradecanoyl-CoA + AMP + diphosphate. It carries out the reaction (9Z)-octadecenoate + ATP + CoA = (9Z)-octadecenoyl-CoA + AMP + diphosphate. The enzyme catalyses (9Z,12Z,15Z)-octadecatrienoate + ATP + CoA = (9Z,12Z,15Z)-octadecatrienoyl-CoA + AMP + diphosphate. It catalyses the reaction (5Z,8Z,11Z,14Z)-eicosatetraenoate + ATP + CoA = (5Z,8Z,11Z,14Z)-eicosatetraenoyl-CoA + AMP + diphosphate. It functions in the pathway lipid metabolism; fatty acid metabolism. Its activity is regulated as follows. Inhibited by 2-hydroxydodecanoic acid, a typical inhibitor of medium-chain acyl-CoA synthetases. Catalyzes the activation of medium-chain fatty acids as acyl-coenzyme A (acyl-CoA). Shows maximal activity with saturated fatty acids of medium-chain length between C6 and C12. Has lower activity with tridecanoic acid (C13), tetradecanoic acid (C14) and with unsaturated fatty acids like oleic acid (C18:1), linolenic acid (C18:3) and arachidonic acid (C20:4). Shows weak activity with some aromatic carbon acids. Involved in the metabolism of fatty acid during mycobacterial survival in macrophages. In Mycobacterium avium, this protein is Medium-chain acyl-CoA ligase Mig.